Here is a 631-residue protein sequence, read N- to C-terminus: Phosphomethylpyrimidine synthase (631 aa).

Residues asparagine 239, methionine 268, tyrosine 297, histidine 333, 353 to 355, 394 to 397, and glutamate 433 each bind substrate; these read SRG and DGLR. Histidine 437 contributes to the Zn(2+) binding site. Tyrosine 460 provides a ligand contact to substrate. Histidine 501 is a binding site for Zn(2+). [4Fe-4S] cluster-binding residues include cysteine 581, cysteine 584, and cysteine 589.

The protein belongs to the ThiC family. In terms of assembly, homodimer. [4Fe-4S] cluster serves as cofactor.

The catalysed reaction is 5-amino-1-(5-phospho-beta-D-ribosyl)imidazole + S-adenosyl-L-methionine = 4-amino-2-methyl-5-(phosphooxymethyl)pyrimidine + CO + 5'-deoxyadenosine + formate + L-methionine + 3 H(+). Its pathway is cofactor biosynthesis; thiamine diphosphate biosynthesis. In terms of biological role, catalyzes the synthesis of the hydroxymethylpyrimidine phosphate (HMP-P) moiety of thiamine from aminoimidazole ribotide (AIR) in a radical S-adenosyl-L-methionine (SAM)-dependent reaction. In Salmonella dublin (strain CT_02021853), this protein is Phosphomethylpyrimidine synthase.